The primary structure comprises 569 residues: Urease subunit alpha (569 aa).

Residues 131–569 form the Urease domain; that stretch reads GGFDSHIHFI…LPMAQRYFLF (439 aa). Ni(2+) contacts are provided by H136, H138, and K219. K219 carries the post-translational modification N6-carboxylysine. H221 lines the substrate pocket. The Ni(2+) site is built by H248 and H274. Residue H322 is the Proton donor of the active site. D362 is a binding site for Ni(2+).

It belongs to the metallo-dependent hydrolases superfamily. Urease alpha subunit family. In terms of assembly, heterotrimer of UreA (gamma), UreB (beta) and UreC (alpha) subunits. Three heterotrimers associate to form the active enzyme. Ni cation serves as cofactor. In terms of processing, carboxylation allows a single lysine to coordinate two nickel ions.

It is found in the cytoplasm. It catalyses the reaction urea + 2 H2O + H(+) = hydrogencarbonate + 2 NH4(+). It participates in nitrogen metabolism; urea degradation; CO(2) and NH(3) from urea (urease route): step 1/1. This chain is Urease subunit alpha, found in Roseobacter denitrificans (strain ATCC 33942 / OCh 114) (Erythrobacter sp. (strain OCh 114)).